The primary structure comprises 483 residues: Shaker-related potassium channel tsha2 (483 aa).

The Cytoplasmic portion of the chain corresponds to 1-165 (MTVVSCEIQD…YPESSGPARM (165 aa)). The chain crosses the membrane as a helical span at residues 166–186 (IAVVSVSVIVISIVIFCLETL). Residues 187–220 (PQFREDTSANLPLSNHHTTNGTTLHKKPNLFTDP) are Extracellular-facing. The helical transmembrane segment at 221 to 241 (FFMVETLCIVWFSFEFLVRFL) threads the bilayer. The Cytoplasmic portion of the chain corresponds to 242–252 (SCPSKPAFFKN). A lipid anchor (S-palmitoyl cysteine) is attached at Cys243. Residues 253–273 (AMNSIDILAIAPYFITLGLEL) form a helical membrane-spanning segment. Residues 274-324 (AEQQEAGSEQAMSLAILRVIRLVRVFRIFKLSRHSKGLQILGQTLHASISE) lie on the Extracellular side of the membrane. A helical; Voltage-sensor membrane pass occupies residues 325–345 (LGLLIFFLLIGVILFSSAVYF). Topologically, residues 346-353 (AEADDPES) are cytoplasmic. Residues 354 to 374 (GFSSIPAAFWWAVVSMTTVGY) form a helical membrane-spanning segment. Residues 371 to 376 (TVGYGD) carry the Selectivity filter motif. Over 375–385 (GDMCPVTIGGK) the chain is Extracellular. Residues 386 to 406 (IVGSMCAIAGVLTIALPVPVI) form a helical membrane-spanning segment. Topologically, residues 407–483 (VSNFNYFYHR…EHYTGKLTDV (77 aa)) are cytoplasmic. Tyr426 is modified (phosphotyrosine). Position 430 is a phosphothreonine (Thr430). Over residues 440-452 (EFKSTSDSRQSLT) the composition is skewed to polar residues. The segment at 440 to 459 (EFKSTSDSRQSLTKSEDTEE) is disordered. The short motif at 481-483 (TDV) is the PDZ-binding element.

It belongs to the potassium channel family. A (Shaker) (TC 1.A.1.2) subfamily. As to quaternary structure, heterotetramer of potassium channel proteins. Binds PDZ domains of dlg1, dlg2 and dlg4. Expressed in oligodendrocytes and astrocytes.

It is found in the membrane. Its function is as follows. Mediates the voltage-dependent potassium ion permeability of excitable membranes. Assuming opened or closed conformations in response to the voltage difference across the membrane, the protein forms a potassium-selective channel through which potassium ions may pass in accordance with their electrochemical gradient. This is Shaker-related potassium channel tsha2 from Oncorhynchus mykiss (Rainbow trout).